We begin with the raw amino-acid sequence, 257 residues long: MNPLIIKLGGVLLDSEEALERLFTALDSYRQQHQRPLVIVHGGGCLVDELMKKLSLPVVKKNGLRVTPADQIDIITGALAGTANKTLLAWAIKHQINAVGLSLADGGSVTVTPLDPALGHVGNAQPGSPLLLNTLLGAGYLPVISSIGITADGQLMNVNADQAATALAATLGADLILLSDVSGILDGKGQRIAEMTAQKAEQLIAQGIITDGMVVKVNAALDAARTLGRPVDIASWRHADQLPALFNGVSIGTRILA.

Substrate-binding positions include 43 to 44, Arg-65, and Asn-157; that span reads GG. Residues 180–185 and 208–210 contribute to the ATP site; these read DVSGIL and IIT.

The protein belongs to the acetylglutamate kinase family. ArgB subfamily. As to quaternary structure, homodimer.

Its subcellular location is the cytoplasm. It carries out the reaction N-acetyl-L-glutamate + ATP = N-acetyl-L-glutamyl 5-phosphate + ADP. Its pathway is amino-acid biosynthesis; L-arginine biosynthesis; N(2)-acetyl-L-ornithine from L-glutamate: step 2/4. Functionally, catalyzes the ATP-dependent phosphorylation of N-acetyl-L-glutamate. The sequence is that of Acetylglutamate kinase from Serratia proteamaculans (strain 568).